Reading from the N-terminus, the 255-residue chain is Diphthine synthase (255 aa).

Residues Leu-9, Asp-85, Val-88, 113–114, Leu-164, Ala-207, and His-232 contribute to the S-adenosyl-L-methionine site; that span reads SI.

Belongs to the diphthine synthase family. As to quaternary structure, homodimer.

The catalysed reaction is 2-[(3S)-amino-3-carboxypropyl]-L-histidyl-[translation elongation factor 2] + 3 S-adenosyl-L-methionine = diphthine-[translation elongation factor 2] + 3 S-adenosyl-L-homocysteine + 3 H(+). It participates in protein modification; peptidyl-diphthamide biosynthesis. S-adenosyl-L-methionine-dependent methyltransferase that catalyzes the trimethylation of the amino group of the modified target histidine residue in translation elongation factor 2 (EF-2), to form an intermediate called diphthine. The three successive methylation reactions represent the second step of diphthamide biosynthesis. The polypeptide is Diphthine synthase (Methanococcus maripaludis (strain C5 / ATCC BAA-1333)).